A 91-amino-acid polypeptide reads, in one-letter code: DNA-binding protein HU (91 aa).

It belongs to the bacterial histone-like protein family.

Functionally, histone-like DNA-binding protein which is capable of wrapping DNA to stabilize it, and thus to prevent its denaturation under extreme environmental conditions. Also seems to act as a fortuitous virulence factor in delayed sequelae by binding to heparan sulfate-proteoglycans in the extracellular matrix of target organs and acting as a nidus for in situ immune complex formation. In Streptococcus pyogenes serotype M1, this protein is DNA-binding protein HU (hup).